A 479-amino-acid chain; its full sequence is MSEFAIRNMDQVAPVSNMYRGMLKRQPAFDTFDSSNSLFAGYFLSLNEDQTLQEVPTGFDSTSYESNNCELPLLTPCSKAVMSQALKDTFSGFTKEQCRLGIPNNPWLWTEQHVCQWLAWATNEFSLANVNIHQFLMSGQDLCNLGKERFLELAPDYVGDILWEHLEQMIKDSQEKTQDQYVESSHLTSVPHWVNNNSLTVNVDQTPYGIQMPGYPKALSYPKPNLLSDICQTSTGPNLLSPEQDFSLFPKTQVDAVSVNYCTVNQDFTRSNLNLLIDNSGKLREHESSESGAESYESSDSMLQSWNSQSSLVDLQRVPSYESFEDDCSQSLCMSKPTMSFKDYIQDRSDPVEQGKPVIPAAILAGFTGSGPIQLWQFLLELLTDKSCQSFISWTGDGWEFKLADPDEVARRWGRRKNKPKMNYEKLSRGLRYYYDKNIIHKTSGKRYVYRFVCDLQNLLGYTAEELHAMLGVQPDTED.

In terms of domain architecture, PNT spans 88 to 173; it reads DTFSGFTKEQ…EHLEQMIKDS (86 aa). Residues 373–453 constitute a DNA-binding region (ETS); the sequence is IQLWQFLLEL…SGKRYVYRFV (81 aa).

It belongs to the ETS family.

It is found in the nucleus. In terms of biological role, probable transcription factor. The sequence is that of Protein C-ets-2 (ETS2) from Gallus gallus (Chicken).